Consider the following 115-residue polypeptide: Large ribosomal subunit protein bL19 (115 aa).

The protein belongs to the bacterial ribosomal protein bL19 family.

This protein is located at the 30S-50S ribosomal subunit interface and may play a role in the structure and function of the aminoacyl-tRNA binding site. This is Large ribosomal subunit protein bL19 from Lacticaseibacillus casei (strain BL23) (Lactobacillus casei).